The sequence spans 191 residues: Penicillin-binding protein activator LpoB (191 aa).

The signal sequence occupies residues 1 to 16 (MKRILFVILSTMLLAS). Cys17 carries the N-palmitoyl cysteine lipid modification. A lipid anchor (S-diacylglycerol cysteine) is attached at Cys17. Residues 25–48 (QPAPVTPVEPKEKQETTPIEPSEK) form a disordered region.

Belongs to the LpoB family. In terms of assembly, interacts with PBP1b.

It is found in the cell outer membrane. In terms of biological role, regulator of peptidoglycan synthesis that is essential for the function of penicillin-binding protein 1B (PBP1b). The protein is Penicillin-binding protein activator LpoB of Xenorhabdus nematophila (strain ATCC 19061 / DSM 3370 / CCUG 14189 / LMG 1036 / NCIMB 9965 / AN6).